Here is a 310-residue protein sequence, read N- to C-terminus: Ribosomal RNA small subunit methyltransferase H (310 aa).

S-adenosyl-L-methionine contacts are provided by residues G35–H37, D52, F79, D100, and Q107.

It belongs to the methyltransferase superfamily. RsmH family.

It localises to the cytoplasm. It carries out the reaction cytidine(1402) in 16S rRNA + S-adenosyl-L-methionine = N(4)-methylcytidine(1402) in 16S rRNA + S-adenosyl-L-homocysteine + H(+). Specifically methylates the N4 position of cytidine in position 1402 (C1402) of 16S rRNA. In Anaeromyxobacter dehalogenans (strain 2CP-1 / ATCC BAA-258), this protein is Ribosomal RNA small subunit methyltransferase H.